Consider the following 129-residue polypeptide: Large ribosomal subunit protein uL22 (129 aa).

The protein belongs to the universal ribosomal protein uL22 family. As to quaternary structure, part of the 50S ribosomal subunit.

Functionally, this protein binds specifically to 23S rRNA; its binding is stimulated by other ribosomal proteins, e.g. L4, L17, and L20. It is important during the early stages of 50S assembly. It makes multiple contacts with different domains of the 23S rRNA in the assembled 50S subunit and ribosome. Its function is as follows. The globular domain of the protein is located near the polypeptide exit tunnel on the outside of the subunit, while an extended beta-hairpin is found that lines the wall of the exit tunnel in the center of the 70S ribosome. This is Large ribosomal subunit protein uL22 from Rhizobium meliloti (strain 1021) (Ensifer meliloti).